We begin with the raw amino-acid sequence, 300 residues long: Spermine synthase SPE4 (300 aa).

S5 bears the Phosphoserine mark. One can recognise a PABS domain in the interval 12–255; that stretch reads DGWFREINDK…GQLGLIVCSN (244 aa). S-adenosyl 3-(methylsulfanyl)propylamine is bound by residues Q44, D99, E119, and 151–152; that span reads DG. Residue D174 is the Proton acceptor of the active site. D177 contributes to the spermidine binding site.

Belongs to the spermidine/spermine synthase family.

The catalysed reaction is S-adenosyl 3-(methylsulfanyl)propylamine + spermidine = spermine + S-methyl-5'-thioadenosine + H(+). Its pathway is amine and polyamine biosynthesis; spermine biosynthesis; spermine from spermidine: step 1/1. This chain is Spermine synthase SPE4 (SPE4), found in Saccharomyces cerevisiae (strain ATCC 204508 / S288c) (Baker's yeast).